Here is a 574-residue protein sequence, read N- to C-terminus: GRB2-associated-binding protein 4 (574 aa).

The tract at residues 1–33 (MSLPSPSPSRELCPPDPAFAPLSSWPGSGPAGG) is disordered. The region spanning 39 to 152 (HVLYSGWLRK…WVQSICQICG (114 aa)) is the PH domain. 4 disordered regions span residues 176 to 200 (PAEP…PVSH), 215 to 234 (LRSH…ASFS), 293 to 331 (SLAS…RPAE), and 418 to 513 (PPVN…PRST). Over residues 181-193 (CSHQHLPQEQEPT) the composition is skewed to polar residues. Polar residues-rich tracts occupy residues 302–318 (GSLT…SGKY) and 424–442 (LKPN…NNRV). Residues 457 to 478 (SGTSHTFDSSSSQHPISTQSIT) show a composition bias toward low complexity. Residues 502-513 (GGTSSSAPPRST) show a composition bias toward polar residues.

It belongs to the GAB family.

This is GRB2-associated-binding protein 4 (GAB4) from Homo sapiens (Human).